Consider the following 477-residue polypeptide: UDP-N-acetylmuramate--L-alanine ligase (477 aa).

118–124 (GTHGKTS) contacts ATP.

It belongs to the MurCDEF family.

The protein localises to the cytoplasm. The enzyme catalyses UDP-N-acetyl-alpha-D-muramate + L-alanine + ATP = UDP-N-acetyl-alpha-D-muramoyl-L-alanine + ADP + phosphate + H(+). It participates in cell wall biogenesis; peptidoglycan biosynthesis. Cell wall formation. In Corynebacterium diphtheriae (strain ATCC 700971 / NCTC 13129 / Biotype gravis), this protein is UDP-N-acetylmuramate--L-alanine ligase.